The chain runs to 99 residues: Malonate decarboxylase acyl carrier protein (99 aa).

The residue at position 25 (S25) is an O-(phosphoribosyl dephospho-coenzyme A)serine.

The protein belongs to the MdcC family. Post-translationally, covalently binds the prosthetic group of malonate decarboxylase.

It is found in the cytoplasm. In terms of biological role, subunit of malonate decarboxylase, it is an acyl carrier protein to which acetyl and malonyl thioester residues are bound via a 2'-(5''-phosphoribosyl)-3'-dephospho-CoA prosthetic group and turn over during the catalytic mechanism. In Pseudomonas putida (strain GB-1), this protein is Malonate decarboxylase acyl carrier protein.